The following is a 631-amino-acid chain: MBT domain-containing protein 1 (631 aa).

The tract at residues 1 to 31 (MFDGYDSCSEDTSSSSSSEESEEEVAPLPSN) is disordered. An FCS-type zinc finger spans residues 45-80 (PDGKSGMATCEMCGMVGVRDAFYSKTKRFCSVSCSR). Zn(2+) contacts are provided by Cys-54, Cys-57, Cys-74, and Cys-78. Lys-115 carries the post-translational modification N6-acetyllysine. MBT repeat units lie at residues 144–248 (FSWG…LVPP), 256–353 (TNWK…IGHR), 354–459 (FKRS…LTPP), and 467–563 (FKWF…LQPP). Residues 563–631 (PASQSSRESQ…SATVYIKQEP (69 aa)) are disordered. Over residues 564 to 576 (ASQSSRESQSASS) the composition is skewed to low complexity. Residues 577 to 593 (KQKKKAKSQQYKGHKKM) show a composition bias toward basic residues.

As to quaternary structure, monomer. Component of the NuA4 histone acetyltransferase complex. Interacts with EPC1; interaction is direct and promotes recruitment of MBTD1 into the NuA4 histone acetyltransferase complex.

The protein localises to the nucleus. It is found in the chromosome. Its function is as follows. Chromatin reader component of the NuA4 histone acetyltransferase complex, a multiprotein complex involved in transcriptional activation of select genes principally by acetylation of nucleosomal histones H4 and H2A. The NuA4 complex plays a direct role in repair of DNA double-strand breaks (DSBs) by promoting homologous recombination (HR). MBTD1 specifically recognizes and binds monomethylated and dimethylated 'Lys-20' on histone H4 (H4K20me1 and H4K20me2, respectively). In the NuA4 complex, MBTD1 promotes recruitment of the complex to H4K20me marks by competing with TP53BP1 for binding to H4K20me. Following recruitment to H4K20me at DNA breaks, the NuA4 complex catalyzes acetylation of 'Lys-15' on histone H2A (H2AK15), blocking the ubiquitination mark required for TP53BP1 localization at DNA breaks, thereby promoting homologous recombination (HR). This Mus musculus (Mouse) protein is MBT domain-containing protein 1.